Consider the following 233-residue polypeptide: Large ribosomal subunit protein uL1 (233 aa).

This sequence belongs to the universal ribosomal protein uL1 family. In terms of assembly, part of the 50S ribosomal subunit.

Binds directly to 23S rRNA. The L1 stalk is quite mobile in the ribosome, and is involved in E site tRNA release. Its function is as follows. Protein L1 is also a translational repressor protein, it controls the translation of the L11 operon by binding to its mRNA. In Geobacillus thermodenitrificans (strain NG80-2), this protein is Large ribosomal subunit protein uL1.